Here is a 78-residue protein sequence, read N- to C-terminus: uncharacterized protein (78 aa).

The signal sequence occupies residues 1–27; sequence MQNSKTDMCAALWAVTGLVLNVAVRFA.

This is an uncharacterized protein from Dryophytes versicolor (chameleon treefrog).